Reading from the N-terminus, the 544-residue chain is Ribosomal protein S6 kinase-like 1 (544 aa).

The MIT domain maps to 87–115; that stretch reads VHVDPNKERREAVKLKITKYLRRAEEIFN. The region spanning 145 to 534 is the Protein kinase domain; that stretch reads SALEQLKGCR…TSRLKSHPFF (390 aa). Residues 151-159 and Lys-177 contribute to the ATP site; that span reads KGCRVVGII. Disordered regions lie at residues 262–344 and 353–372; these read PAEL…HWVR and AYGR…SLGS. Residues 303 to 313 are compositionally biased toward polar residues; it reads SRPSAVFSSDP. Asp-407 serves as the catalytic Proton acceptor.

It belongs to the protein kinase superfamily. Ser/Thr protein kinase family. S6 kinase subfamily.

It carries out the reaction L-seryl-[protein] + ATP = O-phospho-L-seryl-[protein] + ADP + H(+). The catalysed reaction is L-threonyl-[protein] + ATP = O-phospho-L-threonyl-[protein] + ADP + H(+). The polypeptide is Ribosomal protein S6 kinase-like 1 (Rps6kl1) (Mus musculus (Mouse)).